We begin with the raw amino-acid sequence, 299 residues long: Leucine zipper transcription factor-like protein 1 (299 aa).

Positions 96 to 299 (LKLQTDISEL…KRLAKYESED (204 aa)) form a coiled coil. The segment at 145-299 (GTTELLNKEI…KRLAKYESED (155 aa)) is interaction with BSS9.

Belongs to the LZTFL1 family. As to quaternary structure, self-associates. Interacts with BBS9; the interaction mediates the association of LZTL1 with the BBsome complex and regulates BBSome ciliary trafficking. As to expression, highly expressed in testis. Expressed in brain, cerebellum, eye, heart, kidney, liver, lung and trachea. In small intestine, graded expression along the crypt-villus axis with high levels in the villus apex and lower levels in the crypt stem cells (at protein level). Not expressed in skeletal muscle and white adipose tissue.

Its subcellular location is the cytoplasm. Its function is as follows. Regulates ciliary localization of the BBSome complex. Together with the BBSome complex, controls SMO ciliary trafficking and contributes to the sonic hedgehog (SHH) pathway regulation. May play a role in neurite outgrowth. May have tumor suppressor function. The chain is Leucine zipper transcription factor-like protein 1 (Lztfl1) from Mus musculus (Mouse).